A 314-amino-acid polypeptide reads, in one-letter code: Ribonuclease Z (314 aa).

Histidine 60, histidine 62, aspartate 64, histidine 65, histidine 140, aspartate 209, and histidine 269 together coordinate Zn(2+). Aspartate 64 acts as the Proton acceptor in catalysis.

This sequence belongs to the RNase Z family. As to quaternary structure, homodimer. Zn(2+) is required as a cofactor.

It carries out the reaction Endonucleolytic cleavage of RNA, removing extra 3' nucleotides from tRNA precursor, generating 3' termini of tRNAs. A 3'-hydroxy group is left at the tRNA terminus and a 5'-phosphoryl group is left at the trailer molecule.. Its function is as follows. Zinc phosphodiesterase, which displays some tRNA 3'-processing endonuclease activity. Probably involved in tRNA maturation, by removing a 3'-trailer from precursor tRNA. The protein is Ribonuclease Z of Methanococcus maripaludis (strain C5 / ATCC BAA-1333).